The primary structure comprises 115 residues: NAD(P)H-quinone oxidoreductase subunit M (115 aa).

It belongs to the complex I NdhM subunit family. As to quaternary structure, NDH-1 can be composed of about 15 different subunits; different subcomplexes with different compositions have been identified which probably have different functions.

The protein resides in the cellular thylakoid membrane. The enzyme catalyses a plastoquinone + NADH + (n+1) H(+)(in) = a plastoquinol + NAD(+) + n H(+)(out). The catalysed reaction is a plastoquinone + NADPH + (n+1) H(+)(in) = a plastoquinol + NADP(+) + n H(+)(out). NDH-1 shuttles electrons from an unknown electron donor, via FMN and iron-sulfur (Fe-S) centers, to quinones in the respiratory and/or the photosynthetic chain. The immediate electron acceptor for the enzyme in this species is believed to be plastoquinone. Couples the redox reaction to proton translocation, and thus conserves the redox energy in a proton gradient. Cyanobacterial NDH-1 also plays a role in inorganic carbon-concentration. This chain is NAD(P)H-quinone oxidoreductase subunit M, found in Prochlorococcus marinus (strain MIT 9215).